The following is a 430-amino-acid chain: UDP-N-acetylglucosamine 1-carboxyvinyltransferase (430 aa).

K22 to N23 serves as a coordination point for phosphoenolpyruvate. A UDP-N-acetyl-alpha-D-glucosamine-binding site is contributed by R102. Catalysis depends on C126, which acts as the Proton donor. C126 bears the 2-(S-cysteinyl)pyruvic acid O-phosphothioketal mark. Residues R131–L135, K172–V175, D317, and I339 each bind UDP-N-acetyl-alpha-D-glucosamine.

It belongs to the EPSP synthase family. MurA subfamily.

It localises to the cytoplasm. It catalyses the reaction phosphoenolpyruvate + UDP-N-acetyl-alpha-D-glucosamine = UDP-N-acetyl-3-O-(1-carboxyvinyl)-alpha-D-glucosamine + phosphate. The protein operates within cell wall biogenesis; peptidoglycan biosynthesis. Functionally, cell wall formation. Adds enolpyruvyl to UDP-N-acetylglucosamine. In Rhizobium etli (strain ATCC 51251 / DSM 11541 / JCM 21823 / NBRC 15573 / CFN 42), this protein is UDP-N-acetylglucosamine 1-carboxyvinyltransferase.